A 191-amino-acid polypeptide reads, in one-letter code: Protein GrpE (191 aa).

Over residues 1 to 19 (MKDEHNQKHDHLSQKEPES) the composition is skewed to basic and acidic residues. Positions 1–44 (MKDEHNQKHDHLSQKEPESYQKACACKEQQDEEMQEAGEKEGEI) are disordered.

The protein belongs to the GrpE family. Homodimer.

The protein localises to the cytoplasm. In terms of biological role, participates actively in the response to hyperosmotic and heat shock by preventing the aggregation of stress-denatured proteins, in association with DnaK and GrpE. It is the nucleotide exchange factor for DnaK and may function as a thermosensor. Unfolded proteins bind initially to DnaJ; upon interaction with the DnaJ-bound protein, DnaK hydrolyzes its bound ATP, resulting in the formation of a stable complex. GrpE releases ADP from DnaK; ATP binding to DnaK triggers the release of the substrate protein, thus completing the reaction cycle. Several rounds of ATP-dependent interactions between DnaJ, DnaK and GrpE are required for fully efficient folding. The chain is Protein GrpE from Helicobacter pylori (strain G27).